A 59-amino-acid chain; its full sequence is Large ribosomal subunit protein bL32 (59 aa).

Belongs to the bacterial ribosomal protein bL32 family.

The sequence is that of Large ribosomal subunit protein bL32 from Malacoplasma penetrans (strain HF-2) (Mycoplasma penetrans).